The following is a 339-amino-acid chain: DNA-directed RNA polymerase subunit alpha (339 aa).

The tract at residues Met1–Asp238 is alpha N-terminal domain (alpha-NTD). Positions Leu255–Val339 are alpha C-terminal domain (alpha-CTD).

This sequence belongs to the RNA polymerase alpha chain family. In terms of assembly, homodimer. The RNAP catalytic core consists of 2 alpha, 1 beta, 1 beta' and 1 omega subunit. When a sigma factor is associated with the core the holoenzyme is formed, which can initiate transcription.

It catalyses the reaction RNA(n) + a ribonucleoside 5'-triphosphate = RNA(n+1) + diphosphate. Functionally, DNA-dependent RNA polymerase catalyzes the transcription of DNA into RNA using the four ribonucleoside triphosphates as substrates. This Anaeromyxobacter sp. (strain Fw109-5) protein is DNA-directed RNA polymerase subunit alpha.